Consider the following 344-residue polypeptide: Ras association domain-containing protein 1 (344 aa).

The residue at position 2 (serine 2) is an N-acetylserine. Serine 2 bears the Phosphoserine mark. Positions 2–119 (SGEPELIELR…DLGWEPAVER (118 aa)) are mediates interaction with E4F1. The residue at position 36 (arginine 36) is an Omega-N-methylarginine. The Phorbol-ester/DAG-type zinc-finger motif lies at 51-105 (GHRFQPAGPATHTWCDLCGDFIWGVVRKGLQCARLSADCKFTCHYRCRALVCLDC). Low complexity predominate over residues 179–189 (SVPSSKKPPSL). Positions 179–203 (SVPSSKKPPSLQDARRGPGRGTSVR) are disordered. Residues 198 to 292 (RGTSVRRRTS…LSFVLKENDS (95 aa)) form the Ras-associating domain. Positions 294–341 (EVNWDAFSMPELHNFLRILQREEEEHLRQILQKYSYCRQKIQEALHAC) constitute an SARAH domain. Residues 315–318 (EEEE) form an MOAP1-binding region.

Interacts with MAP1S. Interacts with XPA. Binds to the N-terminal of CDC20 during prometaphase. Binds to STK3/MST2 and STK4/MST1. Recruited to the TNFRSF1A and TNFRSF10A complexes in response to their respective cognate ligand, after internalization. Can self-associate. Part of a complex with MDM2, DAXX, RASSF1 and USP7. Interacts with ECM2. As to quaternary structure, interacts with MOAP1. Interacts with E4F1. Interacts with RSSF5 and probably associates with HRAS via a RSSF1 isoform A-RSSF5 heterodimer. Interacts (via C-terminus) with DAXX (via N-terminus); the interaction is independent of MDM2 and TP53. Interacts (via N-terminus) with MDM2 (via C-terminus); the interaction is independent of TP53. Interacts with RAB39A. Interacts with RAB39B; the interaction is weak. In terms of assembly, interacts (via N-terminus) with DAXX. Interacts with RAB39B; the interaction is strong. Does not interact with RAB39A. Interacts (via N-terminus) with DAXX. In terms of tissue distribution, isoform A and isoform C are ubiquitously expressed in all tissues tested, however isoform A is absent in many corresponding cancer cell lines. Isoform B is mainly expressed in hematopoietic cells.

The protein localises to the cytoplasm. It is found in the cytoskeleton. The protein resides in the microtubule organizing center. It localises to the centrosome. Its subcellular location is the spindle. The protein localises to the spindle pole. It is found in the nucleus. Potential tumor suppressor. Required for death receptor-dependent apoptosis. Mediates activation of STK3/MST2 and STK4/MST1 during Fas-induced apoptosis by preventing their dephosphorylation. When associated with MOAP1, promotes BAX conformational change and translocation to mitochondrial membranes in response to TNF and TNFSF10 stimulation. Isoform A interacts with CDC20, an activator of the anaphase-promoting complex, APC, resulting in the inhibition of APC activity and mitotic progression. Inhibits proliferation by negatively regulating cell cycle progression at the level of G1/S-phase transition by regulating accumulation of cyclin D1 protein. Isoform C has been shown not to perform these roles, no function has been identified for this isoform. Isoform A disrupts interactions among MDM2, DAXX and USP7, thus contributing to the efficient activation of TP53 by promoting MDM2 self-ubiquitination in cell-cycle checkpoint control in response to DNA damage. This is Ras association domain-containing protein 1 from Homo sapiens (Human).